The sequence spans 367 residues: Glutamate 5-kinase (367 aa).

An ATP-binding site is contributed by K10. Substrate-binding residues include S50, D137, and N149. ATP contacts are provided by residues 169–170 (TD) and 211–217 (TGGMGTK). A PUA domain is found at 275 to 353 (AGEITVDEGA…QQIDAILGYE (79 aa)).

It belongs to the glutamate 5-kinase family.

It is found in the cytoplasm. The enzyme catalyses L-glutamate + ATP = L-glutamyl 5-phosphate + ADP. The protein operates within amino-acid biosynthesis; L-proline biosynthesis; L-glutamate 5-semialdehyde from L-glutamate: step 1/2. Catalyzes the transfer of a phosphate group to glutamate to form L-glutamate 5-phosphate. The chain is Glutamate 5-kinase from Enterobacter sp. (strain 638).